The following is a 481-amino-acid chain: 1-acylglycerol-3-phosphate O-acyltransferase PNPLA3 (481 aa).

Residues 1 to 41 lie on the Cytoplasmic side of the membrane; sequence MYDAERGWSLSFAGCGFLGFYHVGATRCLSEHAPHLLRDAR. In terms of domain architecture, PNPLA spans 10 to 179; sequence LSFAGCGFLG…SDNVPFIDAK (170 aa). The short motif at 14-19 is the GXGXXG element; sequence GCGFLG. Residues 42–62 traverse the membrane as a helical; Signal-anchor for type II membrane protein segment; sequence MLFGASAGALHCVGVLSGIPL. Positions 45–49 match the GXSXG motif; that stretch reads GASAG. Catalysis depends on Ser-47, which acts as the Nucleophile. Over 63-481 the chain is Lumenal; sequence EQTLQVLSDL…FPSFSLEKSL (419 aa). Asn-89 carries N-linked (GlcNAc...) asparagine glycosylation. Catalysis depends on Asp-166, which acts as the Proton acceptor. The short motif at 166–168 is the DGA/G element; the sequence is DGG. The N-linked (GlcNAc...) asparagine glycan is linked to Asn-280.

It is found in the membrane. Its subcellular location is the lipid droplet. The enzyme catalyses a 1-acyl-sn-glycero-3-phosphate + an acyl-CoA = a 1,2-diacyl-sn-glycero-3-phosphate + CoA. It catalyses the reaction a triacylglycerol + H2O = a diacylglycerol + a fatty acid + H(+). It carries out the reaction a 1-acylglycerol + a 1,3-diacylglycerol = a triacylglycerol + glycerol. The catalysed reaction is a 1-acylglycerol + a 1,2-diacylglycerol = a triacylglycerol + glycerol. The enzyme catalyses 2 a 1-acylglycerol = a 1,2-diacylglycerol + glycerol. It catalyses the reaction 1-(9Z-octadecenoyl)-sn-glycero-3-phosphate + (9Z)-octadecenoyl-CoA = 1,2-di-(9Z-octadecenoyl)-sn-glycero-3-phosphate + CoA. It carries out the reaction 1-(9Z-octadecenoyl)-sn-glycero-3-phosphate + hexadecanoyl-CoA = 1-(9Z)-octadecenoyl-2-hexadecanoyl-sn-glycero-3-phosphate + CoA. The catalysed reaction is 1-(9Z-octadecenoyl)-sn-glycero-3-phosphate + (9Z,12Z)-octadecadienoyl-CoA = 1-(9Z)-octadecenoyl-2-(9Z,12Z)-octadecadienoyl-sn-glycero-3-phosphate + CoA. The enzyme catalyses 1-(9Z-octadecenoyl)-sn-glycero-3-phosphate + (5Z,8Z,11Z,14Z)-eicosatetraenoyl-CoA = 1-(9Z)-octadecenoyl-2-(5Z,8Z,11Z,14Z)-eicosatetraenoyl-sn-glycero-3-phosphate + CoA. It catalyses the reaction 2 1-(9Z-octadecenoyl)-glycerol = 1,2-di-(9Z-octadecenoyl)-glycerol + glycerol. It carries out the reaction 1-(9Z-octadecenoyl)-glycerol + 1,2-di-(9Z-octadecenoyl)-glycerol = 1,2,3-tri-(9Z-octadecenoyl)-glycerol + glycerol. The catalysed reaction is 1-(9Z-octadecenoyl)-glycerol + 1,3-di-(9Z-octadecenoyl)-glycerol = 1,2,3-tri-(9Z-octadecenoyl)-glycerol + glycerol. The enzyme catalyses 1,2,3-tri-(9Z-octadecenoyl)-glycerol + H2O = 1,3-di-(9Z-octadecenoyl)-glycerol + (9Z)-octadecenoate + H(+). It catalyses the reaction a 1,2-diacyl-sn-glycero-3-phosphocholine + H2O = a 1-acyl-sn-glycero-3-phosphocholine + a fatty acid + H(+). Its pathway is phospholipid metabolism. It participates in glycerolipid metabolism. With respect to regulation, the triglyceride lipase activity is inhibited by BEL ((E)-6-(bromomethylene)-3-(1-naphthalenyl)-2H-tetrahydropyran-2-one), a suicide substrate inhibitor. Functionally, specifically catalyzes coenzyme A (CoA)-dependent acylation of 1-acyl-sn-glycerol 3-phosphate (2-lysophosphatidic acid/LPA) to generate phosphatidic acid (PA), an important metabolic intermediate and precursor for both triglycerides and glycerophospholipids. Does not esterify other lysophospholipids. Acyl donors are long chain (at least C16) fatty acyl-CoAs: arachidonoyl-CoA, linoleoyl-CoA, oleoyl-CoA and at a lesser extent palmitoyl-CoA. Additionally possesses low triacylglycerol lipase and CoA-independent acylglycerol transacylase activities and thus may play a role in acyl-chain remodeling of triglycerides. In vitro may express hydrolytic activity against glycerolipids triacylglycerol, diacylglycerol and monoacylglycerol, with a strong preference for oleic acid as the acyl moiety. However, the triacylglycerol hydrolase activity is controversial and may be very low. Possesses phospholipase A2 activity. This is 1-acylglycerol-3-phosphate O-acyltransferase PNPLA3 from Homo sapiens (Human).